Here is a 483-residue protein sequence, read N- to C-terminus: Glutarate-semialdehyde dehydrogenase (483 aa).

Residues 156-157 (WN), 180-183 (KPAS), and 233-234 (GS) each bind NADP(+). Catalysis depends on Glu255, which acts as the Proton acceptor. Residue Leu256 participates in NADP(+) binding. Residue Cys289 is the Nucleophile of the active site. Glu386 is an NADP(+) binding site.

This sequence belongs to the aldehyde dehydrogenase family.

It catalyses the reaction 5-oxopentanoate + NADP(+) + H2O = glutarate + NADPH + 2 H(+). It functions in the pathway amino-acid degradation. Its function is as follows. Catalyzes the conversion of 5-oxopentanoate (glutarate semialdehyde) to glutarate. Involved in L-lysine degradation. This is Glutarate-semialdehyde dehydrogenase from Pseudomonas aeruginosa (strain ATCC 15692 / DSM 22644 / CIP 104116 / JCM 14847 / LMG 12228 / 1C / PRS 101 / PAO1).